Consider the following 160-residue polypeptide: Cytochrome b6-f complex subunit 4 (160 aa).

The next 3 membrane-spanning stretches (helical) occupy residues 36–56 (LLYM…GLAV), 95–115 (LLGV…PFIE), and 131–151 (TVFL…CLPI).

This sequence belongs to the cytochrome b family. PetD subfamily. In terms of assembly, the 4 large subunits of the cytochrome b6-f complex are cytochrome b6, subunit IV (17 kDa polypeptide, petD), cytochrome f and the Rieske protein, while the 4 small subunits are petG, petL, petM and petN. The complex functions as a dimer.

It is found in the plastid. The protein localises to the chloroplast thylakoid membrane. Component of the cytochrome b6-f complex, which mediates electron transfer between photosystem II (PSII) and photosystem I (PSI), cyclic electron flow around PSI, and state transitions. The sequence is that of Cytochrome b6-f complex subunit 4 from Tupiella akineta (Green alga).